Consider the following 273-residue polypeptide: NH(3)-dependent NAD(+) synthetase (273 aa).

47-54 is a binding site for ATP; the sequence is GISGGQDS. Asp-53 contributes to the Mg(2+) binding site. A deamido-NAD(+)-binding site is contributed by Arg-139. Thr-159 lines the ATP pocket. Position 164 (Glu-164) interacts with Mg(2+). 2 residues coordinate deamido-NAD(+): Lys-172 and Asp-179. Residues Lys-188 and Thr-210 each contribute to the ATP site. Residue 259–260 coordinates deamido-NAD(+); it reads HK.

This sequence belongs to the NAD synthetase family. Homodimer.

The catalysed reaction is deamido-NAD(+) + NH4(+) + ATP = AMP + diphosphate + NAD(+) + H(+). Its pathway is cofactor biosynthesis; NAD(+) biosynthesis; NAD(+) from deamido-NAD(+) (ammonia route): step 1/1. Its function is as follows. Catalyzes the ATP-dependent amidation of deamido-NAD to form NAD. Uses ammonia as a nitrogen source. In Staphylococcus aureus (strain N315), this protein is NH(3)-dependent NAD(+) synthetase.